We begin with the raw amino-acid sequence, 89 residues long: Small ribosomal subunit protein uS15 (89 aa).

It belongs to the universal ribosomal protein uS15 family. Part of the 30S ribosomal subunit. Forms a bridge to the 50S subunit in the 70S ribosome, contacting the 23S rRNA.

Its function is as follows. One of the primary rRNA binding proteins, it binds directly to 16S rRNA where it helps nucleate assembly of the platform of the 30S subunit by binding and bridging several RNA helices of the 16S rRNA. Functionally, forms an intersubunit bridge (bridge B4) with the 23S rRNA of the 50S subunit in the ribosome. This chain is Small ribosomal subunit protein uS15, found in Aliivibrio fischeri (strain ATCC 700601 / ES114) (Vibrio fischeri).